The primary structure comprises 651 residues: MEALNQILIEYPPLVVGGVGATAVAAGGALIYRIATRKKPTHLQVNCWFCNQDTVVPYGNRNCWDCPYCEQYNGFQENGDYNKPIPAQYMEHLNHGVSAGVPETPKTLQWVNCQMLLCKKCNNNQTLKIKQLASFIPREDENYDEEIEVYKHHLEQTYKLCRPCQTAVEYYIKHQNRQLRALLFNHQLRRTRDADKAFIKNTYSLSTPAWLILLRILTFLACAFLVAVALSGYVDESPSVTQTLSGGVVPPKRVLQNENESKTDEGSLMWDDLMGLLPEKAVENARLFWQSGSDHQMAVASVGLLTCITGVLMAGPVRLRRIDAVASVLWLLVICFYLAECYLKTDVPSWLEMVKFGITSVCCLVGFAAAVATRKSTSQRRARGRRYLSGGSPGEFFCNHGPLLSAPVSESSTFIPTPPPNLSQLLIRQQSQRTRKASPSSLPGRLNRALSLGTIPSLARADSGFLFSGSRPSSQCKDSPPSDYYSLKSGSRPSSPGPSPTPSVAGSVTSTSSSARQRRPLISPARLNISGQKLRLFSSPLEPFSLASPPPFLSEHNPMHSRGFLPDVPHFHLQNHGSVIDEGSVFEHLEKPMGSSSSSSNCHVDTTTGNNIESKPGWKGFLGMTLWPGLLFASLTINLSFICIYVYYNWR.

Residues 1 to 209 (MEALNQILIE…KNTYSLSTPA (209 aa)) are Nuclear-facing. Asparagine 124 carries an N-linked (GlcNAc...) asparagine glycan. Residues 210–230 (WLILLRILTFLACAFLVAVAL) traverse the membrane as a helical segment. Over 231 to 296 (SGYVDESPSV…LFWQSGSDHQ (66 aa)) the chain is Perinuclear space. N-linked (GlcNAc...) asparagine glycosylation occurs at asparagine 259. Residues 297 to 317 (MAVASVGLLTCITGVLMAGPV) form a helical membrane-spanning segment. The Nuclear portion of the chain corresponds to 318-321 (RLRR). A helical transmembrane segment spans residues 322 to 342 (IDAVASVLWLLVICFYLAECY). At 343–352 (LKTDVPSWLE) the chain is on the perinuclear space side. Residues 353–373 (MVKFGITSVCCLVGFAAAVAT) form a helical membrane-spanning segment. Residues 374–625 (RKSTSQRRAR…PGWKGFLGMT (252 aa)) are Nuclear-facing. N-linked (GlcNAc...) asparagine glycosylation is present at asparagine 421. The tract at residues 469 to 525 (GSRPSSQCKDSPPSDYYSLKSGSRPSSPGPSPTPSVAGSVTSTSSSARQRRPLISPA) is disordered. A compositionally biased stretch (low complexity) spans 502-515 (PSVAGSVTSTSSSA). Asparagine 528 carries an N-linked (GlcNAc...) asparagine glycan. The chain crosses the membrane as a helical span at residues 626-646 (LWPGLLFASLTINLSFICIYV). Residues 647–651 (YYNWR) lie on the Perinuclear space side of the membrane.

Belongs to the TMEM201 family.

The protein localises to the nucleus inner membrane. In terms of biological role, critical regulator of angiogenesis and endothelial cell (EC) migration. Promotes the migration of endothelial cells, which is essential for angiogenesis. May be involved in actin-dependent nuclear movement. May be involved in the organization of the nuclear envelope. May recruit Ran GTPase to the nuclear periphery. This is Transmembrane protein 201 (tmem201) from Danio rerio (Zebrafish).